The sequence spans 506 residues: MGEVILSMTNIHKAFGPVRALRSAALELQRGEIHALAGENGAGKSTLMHIIDGILQPDGGEILLDGKPVRISSPNAANRLGIGFVHQEIALCPEISVAENMYMSETGQSRSWFMNYRDLEKRAATVLREIGDIDPTHRAGDLSISQQQIVEIAKALTLDCRILILDEPTAALTETEAQTLFKIMRRLAARGIAIIYISHRMAEIFEHCDRITVMRDGCHIRTENIADISPEEVVNSMVGRVLDKLYPPKLADDEKSNEVILSVRGLNEGKRVFDVDFDLRRGEILGFAGLIGAGRSEIARAVCRLEGKPKGEVVLRGRSLKLRDYRDSIREGIVYLSEDRKGDGLFLNMSIATNVSALDIGRISNGMGFIQRRKEMKRADELGRRLKLRANSVGDAVSTLSGGNQQKVALAKMLSVEPEVIFLDEPTRGVDVGAKAEIHRQIRELARQGVGVVVISSELPELIGVSDRVLVVREGRITGEVEGDDMTEEKIMQLASITIMQNAAEA.

ABC transporter domains lie at 6–241 and 254–499; these read LSMT…VGRV and EKSN…SITI. Position 38 to 45 (38 to 45) interacts with ATP; sequence GENGAGKS.

Belongs to the ABC transporter superfamily. Ribose importer (TC 3.A.1.2.1) family. In terms of assembly, the complex is composed of an ATP-binding protein (RbsA), two transmembrane proteins (RbsC) and a solute-binding protein (RbsB).

Its subcellular location is the cell inner membrane. It carries out the reaction D-ribose(out) + ATP + H2O = D-ribose(in) + ADP + phosphate + H(+). In terms of biological role, part of the ABC transporter complex RbsABC involved in ribose import. Responsible for energy coupling to the transport system. The sequence is that of Ribose import ATP-binding protein RbsA 2 from Agrobacterium fabrum (strain C58 / ATCC 33970) (Agrobacterium tumefaciens (strain C58)).